Consider the following 289-residue polypeptide: ATP synthase mitochondrial F1 complex assembly factor 2 (289 aa).

The transit peptide at 1 to 40 (MWRIYPRLRDRWRGLLDRRLSDPTVSVWPGPAPQPPARAY) directs the protein to the mitochondrion. An N6-succinyllysine modification is found at lysine 133.

This sequence belongs to the ATP12 family. In terms of assembly, interacts with ATP5F1B; involved in the assembly of the F1 component of the mitochondrial ATP synthase (ATPase). Interacts with FMC1.

It is found in the mitochondrion inner membrane. Its function is as follows. Plays a role in the assembly of the F1 component of the mitochondrial ATP synthase (ATPase). This Mus musculus (Mouse) protein is ATP synthase mitochondrial F1 complex assembly factor 2.